The sequence spans 86 residues: Small ribosomal subunit protein uS17 (86 aa).

Belongs to the universal ribosomal protein uS17 family. Part of the 30S ribosomal subunit.

In terms of biological role, one of the primary rRNA binding proteins, it binds specifically to the 5'-end of 16S ribosomal RNA. The polypeptide is Small ribosomal subunit protein uS17 (Desulfotalea psychrophila (strain LSv54 / DSM 12343)).